The following is a 71-amino-acid chain: Conotoxin ba5b (71 aa).

Residues 1–19 form the signal peptide; it reads MLCLPVFITLLLLVSPSAA. Positions 20–52 are excised as a propeptide; sequence LPVESELQRDLTQDSPKDFRIREPLLLSKMFDR. Cystine bridges form between C54-C63 and C55-C64. Residue C64 is modified to Cysteine amide. Residues 66-71 constitute a propeptide that is removed on maturation; the sequence is RYQRGS.

The protein belongs to the conotoxin T superfamily. Expressed by the venom duct.

It localises to the secreted. The protein is Conotoxin ba5b of Conus bayani (Bayan's cone).